A 447-amino-acid polypeptide reads, in one-letter code: GTPase Der (447 aa).

EngA-type G domains lie at glutamine 4–lysine 165 and valine 180–asparagine 357. GTP-binding positions include glycine 10–serine 17, aspartate 57–leucine 61, asparagine 119–glutamate 122, glycine 186–serine 193, aspartate 233–leucine 237, and asparagine 298–aspartate 301. In terms of domain architecture, KH-like spans lysine 358–lysine 443.

It belongs to the TRAFAC class TrmE-Era-EngA-EngB-Septin-like GTPase superfamily. EngA (Der) GTPase family. In terms of assembly, associates with the 50S ribosomal subunit.

GTPase that plays an essential role in the late steps of ribosome biogenesis. The protein is GTPase Der of Rickettsia canadensis (strain McKiel).